A 142-amino-acid polypeptide reads, in one-letter code: Large ribosomal subunit protein uL13 (142 aa).

It belongs to the universal ribosomal protein uL13 family. In terms of assembly, part of the 50S ribosomal subunit.

Functionally, this protein is one of the early assembly proteins of the 50S ribosomal subunit, although it is not seen to bind rRNA by itself. It is important during the early stages of 50S assembly. The chain is Large ribosomal subunit protein uL13 from Paraburkholderia phytofirmans (strain DSM 17436 / LMG 22146 / PsJN) (Burkholderia phytofirmans).